Reading from the N-terminus, the 443-residue chain is D-serine dehydratase (443 aa).

K118 carries the post-translational modification N6-(pyridoxal phosphate)lysine.

It belongs to the serine/threonine dehydratase family. DsdA subfamily. Monomer. It depends on pyridoxal 5'-phosphate as a cofactor.

It carries out the reaction D-serine = pyruvate + NH4(+). The chain is D-serine dehydratase from Yersinia enterocolitica serotype O:8 / biotype 1B (strain NCTC 13174 / 8081).